A 469-amino-acid polypeptide reads, in one-letter code: 3-isopropylmalate dehydratase large subunit (469 aa).

Residues C347, C410, and C413 each contribute to the [4Fe-4S] cluster site.

This sequence belongs to the aconitase/IPM isomerase family. LeuC type 1 subfamily. As to quaternary structure, heterodimer of LeuC and LeuD. The cofactor is [4Fe-4S] cluster.

It carries out the reaction (2R,3S)-3-isopropylmalate = (2S)-2-isopropylmalate. The protein operates within amino-acid biosynthesis; L-leucine biosynthesis; L-leucine from 3-methyl-2-oxobutanoate: step 2/4. Its function is as follows. Catalyzes the isomerization between 2-isopropylmalate and 3-isopropylmalate, via the formation of 2-isopropylmaleate. The polypeptide is 3-isopropylmalate dehydratase large subunit (Burkholderia pseudomallei (strain 1106a)).